We begin with the raw amino-acid sequence, 320 residues long: Cytochrome f (320 aa).

The first 35 residues, 1–35 (MQTRNTFSWIKEEITRSISVSLMIYIITGASISNA), serve as a signal peptide directing secretion. The heme site is built by Tyr-36, Cys-56, Cys-59, and His-60. A helical transmembrane segment spans residues 286–306 (VQGLLFFLASIVFAQIFLVLK).

This sequence belongs to the cytochrome f family. In terms of assembly, the 4 large subunits of the cytochrome b6-f complex are cytochrome b6, subunit IV (17 kDa polypeptide, petD), cytochrome f and the Rieske protein, while the 4 small subunits are PetG, PetL, PetM and PetN. The complex functions as a dimer. Heme is required as a cofactor.

Its subcellular location is the plastid. It is found in the chloroplast thylakoid membrane. Functionally, component of the cytochrome b6-f complex, which mediates electron transfer between photosystem II (PSII) and photosystem I (PSI), cyclic electron flow around PSI, and state transitions. In Gossypium barbadense (Sea Island cotton), this protein is Cytochrome f.